The primary structure comprises 515 residues: Cytoplasmic tRNA 2-thiolation protein 2 (515 aa).

2 disordered regions span residues M1–R24 and L188–P217. C2 carries the post-translational modification N-acetylcysteine. Phosphoserine occurs at positions 415, 419, 435, and 508.

The protein belongs to the CTU2/NCS2 family. In terms of assembly, component of a complex at least composed of URM1, CTU2/NCS2 and CTU1/ATPBD3.

The protein resides in the cytoplasm. It functions in the pathway tRNA modification; 5-methoxycarbonylmethyl-2-thiouridine-tRNA biosynthesis. Its function is as follows. Plays a central role in 2-thiolation of mcm(5)S(2)U at tRNA wobble positions of tRNA(Lys), tRNA(Glu) and tRNA(Gln). May act by forming a heterodimer with CTU1/ATPBD3 that ligates sulfur from thiocarboxylated URM1 onto the uridine of tRNAs at wobble position. The polypeptide is Cytoplasmic tRNA 2-thiolation protein 2 (Homo sapiens (Human)).